The primary structure comprises 169 residues: Lutropin/choriogonadotropin subunit beta (169 aa).

The N-terminal stretch at 1-20 is a signal peptide; that stretch reads MEMLQGLLLWMLLSVGGVWA. Disulfide bonds link cysteine 29-cysteine 77, cysteine 43-cysteine 92, cysteine 46-cysteine 130, cysteine 54-cysteine 108, cysteine 58-cysteine 110, and cysteine 113-cysteine 120. Asparagine 33 carries an N-linked (GlcNAc...) asparagine glycan. The tract at residues 131–169 is disordered; the sequence is APQTSSSCKDPPSQPLTSTSTPTPGASRRSSHPLPINTS. A compositionally biased stretch (low complexity) spans 145–158; that stretch reads PLTSTSTPTPGASR.

It belongs to the glycoprotein hormones subunit beta family. In terms of assembly, heterodimer of a common alpha chain and a unique beta chain which confers biological specificity to thyrotropin, lutropin, follitropin and gonadotropin.

It is found in the secreted. Its function is as follows. Promotes spermatogenesis and ovulation by stimulating the testes and ovaries to synthesize steroids. The polypeptide is Lutropin/choriogonadotropin subunit beta (LHB) (Equus asinus (Donkey)).